The sequence spans 124 residues: MEYEFRRNSLTGTYLASFSMDHEVLGQWFSEELGPELAKIQQVLDIIKEIQAGKRDSWRLIGGDLTLDLDEEQARIYANALGFEQEYELEESMSLYDAESEAYCGLEDLEEALLSWYEFVQKGR.

Belongs to the UPF0231 family.

The protein is UPF0231 protein Shewana3_0655 of Shewanella sp. (strain ANA-3).